The sequence spans 379 residues: Cytochrome b (379 aa).

The next 4 membrane-spanning stretches (helical) occupy residues 33 to 53, 77 to 98, 113 to 133, and 178 to 198; these read LGSLLGTCLIMQILTGLFLAM, WTIRHLHANGASMFFMCLYLHI, WNTGVMLLLTVMATAFMGYVL, and FFTLHFIAPFIILALVLTHLL. Heme b-binding residues include H83 and H97. Heme b is bound by residues H182 and H196. H201 serves as a coordination point for a ubiquinone. The next 4 membrane-spanning stretches (helical) occupy residues 226-246, 288-308, 320-340, and 347-367; these read IKDILGLLIMILTTLALTLLH, LGGVLTLICSILVLVIIPMTH, ISQCLFWILTADLLILTWIGG, and FTTIGLLASILYFTTILILTP.

The protein belongs to the cytochrome b family. The cytochrome bc1 complex contains 11 subunits: 3 respiratory subunits (MT-CYB, CYC1 and UQCRFS1), 2 core proteins (UQCRC1 and UQCRC2) and 6 low-molecular weight proteins (UQCRH/QCR6, UQCRB/QCR7, UQCRQ/QCR8, UQCR10/QCR9, UQCR11/QCR10 and a cleavage product of UQCRFS1). This cytochrome bc1 complex then forms a dimer. It depends on heme b as a cofactor.

The protein resides in the mitochondrion inner membrane. Functionally, component of the ubiquinol-cytochrome c reductase complex (complex III or cytochrome b-c1 complex) that is part of the mitochondrial respiratory chain. The b-c1 complex mediates electron transfer from ubiquinol to cytochrome c. Contributes to the generation of a proton gradient across the mitochondrial membrane that is then used for ATP synthesis. This chain is Cytochrome b (MT-CYB), found in Bradypus tridactylus (Pale-throated three-toed sloth).